The following is a 170-amino-acid chain: Adenine phosphoribosyltransferase (170 aa).

It belongs to the purine/pyrimidine phosphoribosyltransferase family. Homodimer.

Its subcellular location is the cytoplasm. The catalysed reaction is AMP + diphosphate = 5-phospho-alpha-D-ribose 1-diphosphate + adenine. It functions in the pathway purine metabolism; AMP biosynthesis via salvage pathway; AMP from adenine: step 1/1. Its function is as follows. Catalyzes a salvage reaction resulting in the formation of AMP, that is energically less costly than de novo synthesis. The chain is Adenine phosphoribosyltransferase from Bacillus licheniformis (strain ATCC 14580 / DSM 13 / JCM 2505 / CCUG 7422 / NBRC 12200 / NCIMB 9375 / NCTC 10341 / NRRL NRS-1264 / Gibson 46).